Reading from the N-terminus, the 145-residue chain is D-aminoacyl-tRNA deacylase (145 aa).

The Gly-cisPro motif, important for rejection of L-amino acids signature appears at 137–138 (GP).

Belongs to the DTD family. Homodimer.

It localises to the cytoplasm. It catalyses the reaction glycyl-tRNA(Ala) + H2O = tRNA(Ala) + glycine + H(+). The catalysed reaction is a D-aminoacyl-tRNA + H2O = a tRNA + a D-alpha-amino acid + H(+). In terms of biological role, an aminoacyl-tRNA editing enzyme that deacylates mischarged D-aminoacyl-tRNAs. Also deacylates mischarged glycyl-tRNA(Ala), protecting cells against glycine mischarging by AlaRS. Acts via tRNA-based rather than protein-based catalysis; rejects L-amino acids rather than detecting D-amino acids in the active site. By recycling D-aminoacyl-tRNA to D-amino acids and free tRNA molecules, this enzyme counteracts the toxicity associated with the formation of D-aminoacyl-tRNA entities in vivo and helps enforce protein L-homochirality. This Pseudomonas savastanoi pv. phaseolicola (strain 1448A / Race 6) (Pseudomonas syringae pv. phaseolicola (strain 1448A / Race 6)) protein is D-aminoacyl-tRNA deacylase.